Consider the following 347-residue polypeptide: UDP-3-O-acylglucosamine N-acyltransferase 1 (347 aa).

His-246 acts as the Proton acceptor in catalysis.

This sequence belongs to the transferase hexapeptide repeat family. LpxD subfamily. In terms of assembly, homotrimer.

It carries out the reaction a UDP-3-O-[(3R)-3-hydroxyacyl]-alpha-D-glucosamine + a (3R)-hydroxyacyl-[ACP] = a UDP-2-N,3-O-bis[(3R)-3-hydroxyacyl]-alpha-D-glucosamine + holo-[ACP] + H(+). The protein operates within bacterial outer membrane biogenesis; LPS lipid A biosynthesis. Its function is as follows. Catalyzes the N-acylation of UDP-3-O-acylglucosamine using 3-hydroxyacyl-ACP as the acyl donor. Is involved in the biosynthesis of lipid A, a phosphorylated glycolipid that anchors the lipopolysaccharide to the outer membrane of the cell. This Francisella tularensis subsp. holarctica (strain LVS) protein is UDP-3-O-acylglucosamine N-acyltransferase 1.